Here is a 721-residue protein sequence, read N- to C-terminus: uncharacterized protein (721 aa).

Residues 6–26 (QLIFVNFYVILIIWWFVMGIL) traverse the membrane as a helical segment. 308 to 315 (GGTGSGKT) provides a ligand contact to ATP.

This sequence belongs to the GSP E family. Post-translationally, this protein undergoes a protein self splicing that involves a post-translational excision of the intervening region (intein) followed by peptide ligation.

Its subcellular location is the membrane. This is an uncharacterized protein from Methanocaldococcus jannaschii (strain ATCC 43067 / DSM 2661 / JAL-1 / JCM 10045 / NBRC 100440) (Methanococcus jannaschii).